A 121-amino-acid chain; its full sequence is Small ribosomal subunit protein uS12c (121 aa).

The protein belongs to the universal ribosomal protein uS12 family. Part of the 30S ribosomal subunit.

It localises to the plastid. The protein resides in the chloroplast. Functionally, with S4 and S5 plays an important role in translational accuracy. Located at the interface of the 30S and 50S subunits. The sequence is that of Small ribosomal subunit protein uS12c (rps12) from Bigelowiella natans (Pedinomonas minutissima).